Consider the following 347-residue polypeptide: Phenylalanine--tRNA ligase alpha subunit (347 aa).

Glu261 is a Mg(2+) binding site.

This sequence belongs to the class-II aminoacyl-tRNA synthetase family. Phe-tRNA synthetase alpha subunit type 1 subfamily. In terms of assembly, tetramer of two alpha and two beta subunits. Requires Mg(2+) as cofactor.

The protein resides in the cytoplasm. It carries out the reaction tRNA(Phe) + L-phenylalanine + ATP = L-phenylalanyl-tRNA(Phe) + AMP + diphosphate + H(+). In Streptococcus pyogenes serotype M1, this protein is Phenylalanine--tRNA ligase alpha subunit.